The primary structure comprises 432 residues: Putative cyclin-F1-4 (432 aa).

This sequence belongs to the cyclin family. Cyclin F subfamily.

The chain is Putative cyclin-F1-4 (CycF1-4) from Oryza sativa subsp. japonica (Rice).